The chain runs to 177 residues: 3-hydroxyanthranilate 3,4-dioxygenase (177 aa).

Residue arginine 47 participates in O2 binding. Fe cation is bound by residues histidine 51, glutamate 57, and histidine 95. A substrate-binding site is contributed by glutamate 57. Residues arginine 99 and glutamate 110 each contribute to the substrate site. Fe cation is bound by residues cysteine 125, cysteine 128, cysteine 162, and cysteine 165.

The protein belongs to the 3-HAO family. Homodimer. Fe(2+) serves as cofactor.

It catalyses the reaction 3-hydroxyanthranilate + O2 = (2Z,4Z)-2-amino-3-carboxymuconate 6-semialdehyde. The protein operates within cofactor biosynthesis; NAD(+) biosynthesis; quinolinate from L-kynurenine: step 3/3. In terms of biological role, catalyzes the oxidative ring opening of 3-hydroxyanthranilate to 2-amino-3-carboxymuconate semialdehyde, which spontaneously cyclizes to quinolinate. The sequence is that of 3-hydroxyanthranilate 3,4-dioxygenase from Burkholderia cenocepacia (strain ATCC BAA-245 / DSM 16553 / LMG 16656 / NCTC 13227 / J2315 / CF5610) (Burkholderia cepacia (strain J2315)).